The sequence spans 104 residues: Class I hydrophobin 4 (104 aa).

An N-terminal signal peptide occupies residues 1-16; the sequence is MFASTVFVSLLAVAAA. 4 cysteine pairs are disulfide-bonded: Cys-26/Cys-85, Cys-34/Cys-79, Cys-35/Cys-61, and Cys-86/Cys-99.

It belongs to the fungal hydrophobin family. Self-assembles to form functional amyloid fibrils called rodlets. Self-assembly into fibrillar rodlets occurs spontaneously at hydrophobic:hydrophilic interfaces and the rodlets further associate laterally to form amphipathic monolayers.

The protein resides in the secreted. It is found in the cell wall. Functionally, aerial growth, conidiation, and dispersal of filamentous fungi in the environment rely upon a capability of their secreting small amphipathic proteins called hydrophobins (HPBs) with low sequence identity. Class I can self-assemble into an outermost layer of rodlet bundles on aerial cell surfaces, conferring cellular hydrophobicity that supports fungal growth, development and dispersal; whereas Class II form highly ordered films at water-air interfaces through intermolecular interactions but contribute nothing to the rodlet structure. HYD4 is a class I hydrophobin that negatively regulates aerial mycelial growth, conidiation, carotenoid and adenosine synthesis, resistance to oxidant stress, and fruiting body development. Seems not to be involved in the mycelial growth rate, the hydrophobicity of the mycelia and conidia, nor the conidial virulence on silkworm pupae. This Cordyceps militaris (Caterpillar fungus) protein is Class I hydrophobin 4.